The chain runs to 579 residues: Nif-specific regulatory protein (579 aa).

One can recognise a GAF domain in the interval 40–187; sequence DPVAEVPQIF…MVASLLEQAL (148 aa). Positions 226–454 constitute a Sigma-54 factor interaction domain; sequence IVGSSPAIAE…LENCVNRAAA (229 aa). ATP is bound by residues 254–261 and 317–326; these read GESGTGKE and ADGGTLFLDE. Positions 464–536 are inter-domain linker; that stretch reads EELACRQGAC…PLRTKTAQLS (73 aa). Positions 468 and 473 each coordinate a divalent metal cation. The disordered stretch occupies residues 502 to 529; the sequence is RVSAPPPEPAPAPEPAPEAPPREEVPLR. 7 consecutive repeat copies span residues 505–506, 507–508, 509–510, 511–512, 513–514, 515–516, and 517–518. Residues 505 to 518 form a 7 X 2 AA tandem repeats of X-P region; the sequence is APPPEPAPAPEPAP. Residues 505-520 show a composition bias toward pro residues; that stretch reads APPPEPAPAPEPAPEA. Residues 537–579 form a C-terminal DNA-binding domain region; that stretch reads REELLRALESAGWVQAKAARLLGMTPRQIAYALQKFEIELRKI. Positions 551–570 form a DNA-binding region, H-T-H motif; that stretch reads QAKAARLLGMTPRQIAYALQ.

In terms of assembly, interacts with sigma-54.

Its function is as follows. Required for activation of most nif operons, which are directly involved in nitrogen fixation. This chain is Nif-specific regulatory protein (nifA1), found in Rhodobacter capsulatus (strain ATCC BAA-309 / NBRC 16581 / SB1003).